Here is a 49-residue protein sequence, read N- to C-terminus: Large ribosomal subunit protein bL33A (49 aa).

It belongs to the bacterial ribosomal protein bL33 family.

The chain is Large ribosomal subunit protein bL33A from Bacillus licheniformis (strain ATCC 14580 / DSM 13 / JCM 2505 / CCUG 7422 / NBRC 12200 / NCIMB 9375 / NCTC 10341 / NRRL NRS-1264 / Gibson 46).